Consider the following 78-residue polypeptide: Acyl carrier protein (78 aa).

Positions 2–77 constitute a Carrier domain; that stretch reads DNIVERVKKI…QAVDYILAGK (76 aa). Ser37 is subject to O-(pantetheine 4'-phosphoryl)serine.

Belongs to the acyl carrier protein (ACP) family. In terms of processing, 4'-phosphopantetheine is transferred from CoA to a specific serine of apo-ACP by AcpS. This modification is essential for activity because fatty acids are bound in thioester linkage to the sulfhydryl of the prosthetic group.

The protein resides in the cytoplasm. It participates in lipid metabolism; fatty acid biosynthesis. Its function is as follows. Carrier of the growing fatty acid chain in fatty acid biosynthesis. The chain is Acyl carrier protein from Dechloromonas aromatica (strain RCB).